The primary structure comprises 208 residues: Ribosomal RNA small subunit methyltransferase G (208 aa).

S-adenosyl-L-methionine contacts are provided by residues glycine 76, leucine 81, 127–128 (VE), and arginine 142.

Belongs to the methyltransferase superfamily. RNA methyltransferase RsmG family.

The protein localises to the cytoplasm. It carries out the reaction guanosine(527) in 16S rRNA + S-adenosyl-L-methionine = N(7)-methylguanosine(527) in 16S rRNA + S-adenosyl-L-homocysteine. Functionally, specifically methylates the N7 position of guanine in position 527 of 16S rRNA. In Legionella pneumophila (strain Corby), this protein is Ribosomal RNA small subunit methyltransferase G.